The following is a 159-amino-acid chain: Probable RNA-binding protein EIF1AD (159 aa).

The S1-like domain maps to 18-93 (MMEDDYALPT…VKAEICKILT (76 aa)). The disordered stretch occupies residues 109 to 159 (KFTKKPVQEEATSQNKDDSDFEDDLLPNTNRPVNRDSSDEEEDEETSSEED). The span at 146 to 159 (SDEEEDEETSSEED) shows a compositional bias: acidic residues.

The protein belongs to the EIF1AD family.

The chain is Probable RNA-binding protein EIF1AD from Drosophila melanogaster (Fruit fly).